A 328-amino-acid polypeptide reads, in one-letter code: D-cysteine desulfhydrase (328 aa).

K51 carries the N6-(pyridoxal phosphate)lysine modification.

This sequence belongs to the ACC deaminase/D-cysteine desulfhydrase family. In terms of assembly, homodimer. Requires pyridoxal 5'-phosphate as cofactor.

The enzyme catalyses D-cysteine + H2O = hydrogen sulfide + pyruvate + NH4(+) + H(+). Catalyzes the alpha,beta-elimination reaction of D-cysteine and of several D-cysteine derivatives. It could be a defense mechanism against D-cysteine. In Salmonella typhi, this protein is D-cysteine desulfhydrase.